Here is a 265-residue protein sequence, read N- to C-terminus: Probable autolysin SsaALP (265 aa).

Positions 1–25 are cleaved as a signal peptide; sequence MKKLAFAITATSGAAAFLTHHDAQA. 2 consecutive LysM domains span residues 27–70 and 89–132; these read TQHT…VISV and SSHT…TLQI. Residues 72–92 are disordered; it reads GSDAQNTSNTSPQAGSASSHT. Residues 74–92 are compositionally biased toward polar residues; it reads DAQNTSNTSPQAGSASSHT. The Peptidase C51 domain maps to 141–265; the sequence is TPTATTGSNG…SEVSSYAFIH (125 aa).

The catalysed reaction is Hydrolyzes the link between N-acetylmuramoyl residues and L-amino acid residues in certain cell-wall glycopeptides.. Has weak lytic activity toward S.aureus cells. The sequence is that of Probable autolysin SsaALP from Staphylococcus aureus (strain NCTC 8325 / PS 47).